The chain runs to 187 residues: Large ribosomal subunit protein bL17 (187 aa).

The protein belongs to the bacterial ribosomal protein bL17 family. In terms of assembly, part of the 50S ribosomal subunit. Contacts protein L32.

The protein is Large ribosomal subunit protein bL17 of Rhodococcus opacus (strain B4).